Here is a 701-residue protein sequence, read N- to C-terminus: MNDLFASTNFGTEKLLEKELLSLGVSDIKIIKGGIYYKSNDLLLYKSLMWSRIASRIYLCIKIFTINNIDDLYDHVYSINWTEIFHIHNTFLVNFKGTNNFIRNSLFGALVTKDAIIDQFQNKYASRPNVNLIEPDIRIKLVLLNNNILHIMLDLSGEPLNKRGYRQFYNTTPIKENLATAIVLSSGWNENTPMIDPMCGSGTFLIEAAMISSDRAPGLKRLKWGFQFWKKYNKNLWKKVLEEAEEKFKIGIKKCFQNYFIGYDYDPEIIKKAKKNASNAGVLKIIQFLTKDVNNLKNVYHKEQEGIILSNPPYGERYQTENKLVGLYVQLGITAKKYFKNWKLSIFSASTFLLDFLQMQSHEKYFFKNGPLNCIQKNFLIFFKNSSITTNEFKDRLNKNFKKLKKWINSEKLESFRVYHADLPNYNIIVDVYDKWVVIQEYQAPKSIDHNKAFKRLCDAIYYTKEVLSISINNIVLKTRIKNKNKTQYKKLFNSNDFITIKEYHAKFLVNLTDYVDTGLFSDKRLVRKLLGVLAKGKDFLNLFSYTGTATVYAGLGHANSTTSVDISNTYIKWSARNMSLNNLTSSQHNFIQYDCLKWIKKTNQKFDLIFINPPTFSNSKKMQQSFDLKRDYLDVMIHLKKILRHDGTIIFSSSTRNFEINFNCIKKMQLHAKKITNKIQSKDHLKNSNIYHSWLIKHIK.

Positions leucine 43–leucine 155 constitute a THUMP domain.

Belongs to the methyltransferase superfamily. RlmKL family.

The protein localises to the cytoplasm. It catalyses the reaction guanosine(2445) in 23S rRNA + S-adenosyl-L-methionine = N(2)-methylguanosine(2445) in 23S rRNA + S-adenosyl-L-homocysteine + H(+). It carries out the reaction guanosine(2069) in 23S rRNA + S-adenosyl-L-methionine = N(2)-methylguanosine(2069) in 23S rRNA + S-adenosyl-L-homocysteine + H(+). Specifically methylates the guanine in position 2445 (m2G2445) and the guanine in position 2069 (m7G2069) of 23S rRNA. This Buchnera aphidicola subsp. Acyrthosiphon pisum (strain APS) (Acyrthosiphon pisum symbiotic bacterium) protein is Ribosomal RNA large subunit methyltransferase K/L.